Consider the following 362-residue polypeptide: Inactive 2'-5' oligoadenylate synthetase 1C (362 aa).

The protein belongs to the 2-5A synthase family. In terms of tissue distribution, expressed at highest level in brain with lesser amounts in spleen, kidney, stomach, liver, intestine, ovary, skin and testis. Not detected in lung, thymus, heart and uterus.

In terms of biological role, does not have 2'-5'-OAS activity, but can bind double-stranded RNA. This Mus musculus (Mouse) protein is Inactive 2'-5' oligoadenylate synthetase 1C.